A 214-amino-acid chain; its full sequence is Probable transaldolase (214 aa).

Lys-83 functions as the Schiff-base intermediate with substrate in the catalytic mechanism.

Belongs to the transaldolase family. Type 3B subfamily.

It is found in the cytoplasm. The catalysed reaction is D-sedoheptulose 7-phosphate + D-glyceraldehyde 3-phosphate = D-erythrose 4-phosphate + beta-D-fructose 6-phosphate. It functions in the pathway carbohydrate degradation; pentose phosphate pathway; D-glyceraldehyde 3-phosphate and beta-D-fructose 6-phosphate from D-ribose 5-phosphate and D-xylulose 5-phosphate (non-oxidative stage): step 2/3. Functionally, transaldolase is important for the balance of metabolites in the pentose-phosphate pathway. The polypeptide is Probable transaldolase (Brevibacillus brevis (strain 47 / JCM 6285 / NBRC 100599)).